Consider the following 353-residue polypeptide: Photosystem II D2 protein (353 aa).

Residues 41 to 61 (TAYLALGGWLTGTTFVTSWYT) traverse the membrane as a helical segment. Histidine 118 contacts chlorophyll a. The chain crosses the membrane as a helical span at residues 125 to 141 (GFMLRQFEISRLVGIRP). Pheophytin a-binding residues include glutamine 130 and asparagine 143. Residues 153–166 (VFVSVFLMYPLGQS) traverse the membrane as a helical segment. Position 198 (histidine 198) interacts with chlorophyll a. The helical transmembrane segment at 208 to 228 (GALLCAIHGATVENTLYEDGE) threads the bilayer. A plastoquinone contacts are provided by histidine 215 and phenylalanine 262. Histidine 215 is a binding site for Fe cation. A Fe cation-binding site is contributed by histidine 269. The helical transmembrane segment at 279-295 (GLWTSSIGIIGLALNLR) threads the bilayer.

It belongs to the reaction center PufL/M/PsbA/D family. As to quaternary structure, PSII is composed of 1 copy each of membrane proteins PsbA, PsbB, PsbC, PsbD, PsbE, PsbF, PsbH, PsbI, PsbJ, PsbK, PsbL, PsbM, PsbT, PsbX, PsbY, PsbZ, Psb30/Ycf12, peripheral proteins PsbO, CyanoQ (PsbQ), PsbU, PsbV and a large number of cofactors. It forms dimeric complexes. Requires The D1/D2 heterodimer binds P680, chlorophylls that are the primary electron donor of PSII, and subsequent electron acceptors. It shares a non-heme iron and each subunit binds pheophytin, quinone, additional chlorophylls, carotenoids and lipids. There is also a Cl(-1) ion associated with D1 and D2, which is required for oxygen evolution. The PSII complex binds additional chlorophylls, carotenoids and specific lipids. as cofactor.

It localises to the host cellular thylakoid membrane. It carries out the reaction 2 a plastoquinone + 4 hnu + 2 H2O = 2 a plastoquinol + O2. In terms of biological role, photosystem II (PSII) is a light-driven water:plastoquinone oxidoreductase that uses light energy to abstract electrons from H(2)O, generating O(2) and a proton gradient subsequently used for ATP formation. It consists of a core antenna complex that captures photons, and an electron transfer chain that converts photonic excitation into a charge separation. The D1/D2 (PsbA/PsbD) reaction center heterodimer binds P680, the primary electron donor of PSII as well as several subsequent electron acceptors. D2 is needed for assembly of a stable PSII complex. In Synechococcus phage S-PM2, this protein is Photosystem II D2 protein (psbD).